Reading from the N-terminus, the 460-residue chain is Cobyrinate a,c-diamide synthase (460 aa).

Residues 248–440 (KIAVARDAAF…THFHFGSSTK (193 aa)) enclose the GATase cobBQ-type domain. The active-site Nucleophile is C331.

The protein belongs to the CobB/CbiA family. The cofactor is Mg(2+).

The enzyme catalyses cob(II)yrinate + 2 L-glutamine + 2 ATP + 2 H2O = cob(II)yrinate a,c diamide + 2 L-glutamate + 2 ADP + 2 phosphate + 2 H(+). The protein operates within cofactor biosynthesis; adenosylcobalamin biosynthesis; cob(II)yrinate a,c-diamide from sirohydrochlorin (anaerobic route): step 10/10. Its function is as follows. Catalyzes the ATP-dependent amidation of the two carboxylate groups at positions a and c of cobyrinate, using either L-glutamine or ammonia as the nitrogen source. The chain is Cobyrinate a,c-diamide synthase from Priestia megaterium (Bacillus megaterium).